We begin with the raw amino-acid sequence, 89 residues long: Helix-loop-helix protein 15 (89 aa).

A disordered region spans residues Met1–Lys32. Basic residues predominate over residues Glu22–Lys32. The segment at Lys32–Val45 is basic motif. In terms of domain architecture, bHLH spans Lys32–Leu84. The segment at Glu46–Leu84 is helix-loop-helix motif.

In terms of tissue distribution, expressed in sensory head neurons of the lateral ganglion.

Its subcellular location is the nucleus. Transcription factor which binds the E box motif 5'-CA[TC][AG]TG-3'. Involved in modulating physiological aging, probably by regulating expression of branched-chain amino acid transferase-1, bcat-1. This is Helix-loop-helix protein 15 from Caenorhabditis elegans.